The following is a 222-amino-acid chain: Peroxiredoxin (222 aa).

The 157-residue stretch at 7 to 163 (PRLGEPAPAF…VIRLVDALQT (157 aa)) folds into the Thioredoxin domain. Residue cysteine 49 is the Cysteine sulfenic acid (-SOH) intermediate of the active site. Arginine 126 is a substrate binding site. Cysteine 212 and cysteine 218 are oxidised to a cystine.

The protein belongs to the peroxiredoxin family. Prx6 subfamily. As to quaternary structure, homodecamer. Pentamer of dimers that assemble into a ring structure.

The protein resides in the cytoplasm. It catalyses the reaction a hydroperoxide + [thioredoxin]-dithiol = an alcohol + [thioredoxin]-disulfide + H2O. In terms of biological role, thiol-specific peroxidase that catalyzes the reduction of hydrogen peroxide and organic hydroperoxides to water and alcohols, respectively. Plays a role in cell protection against oxidative stress by detoxifying peroxides. This chain is Peroxiredoxin, found in Aquifex aeolicus (strain VF5).